Here is a 298-residue protein sequence, read N- to C-terminus: ATP phosphoribosyltransferase (298 aa).

The protein belongs to the ATP phosphoribosyltransferase family. Long subfamily. Mg(2+) is required as a cofactor.

The protein resides in the cytoplasm. It carries out the reaction 1-(5-phospho-beta-D-ribosyl)-ATP + diphosphate = 5-phospho-alpha-D-ribose 1-diphosphate + ATP. It functions in the pathway amino-acid biosynthesis; L-histidine biosynthesis; L-histidine from 5-phospho-alpha-D-ribose 1-diphosphate: step 1/9. Feedback inhibited by histidine. Its function is as follows. Catalyzes the condensation of ATP and 5-phosphoribose 1-diphosphate to form N'-(5'-phosphoribosyl)-ATP (PR-ATP). Has a crucial role in the pathway because the rate of histidine biosynthesis seems to be controlled primarily by regulation of HisG enzymatic activity. In Psychromonas ingrahamii (strain DSM 17664 / CCUG 51855 / 37), this protein is ATP phosphoribosyltransferase.